Here is a 143-residue protein sequence, read N- to C-terminus: MEKGEINFFSENDFVLNREQDYRNWIEKAIESENKYIGDISFIFCDDEYLHKINLEYLAHDTYTDIISFDNTLGNTLQGDIYISTERVQENANSFNTEFDEELKRVLIHGILHFCGFKDKTEREQELMRRKEEEKIALFHVEQ.

3 residues coordinate Zn(2+): H109, H113, and D119.

This sequence belongs to the endoribonuclease YbeY family. Requires Zn(2+) as cofactor.

It localises to the cytoplasm. Single strand-specific metallo-endoribonuclease involved in late-stage 70S ribosome quality control and in maturation of the 3' terminus of the 16S rRNA. The polypeptide is Endoribonuclease YbeY (Christiangramia forsetii (strain DSM 17595 / CGMCC 1.15422 / KT0803) (Gramella forsetii)).